A 419-amino-acid chain; its full sequence is Multiple organellar RNA editing factor 1, mitochondrial (419 aa).

Residues 1–60 constitute a mitochondrion transit peptide; that stretch reads MAMISHRLRRALLTATSYVNRSISSSITPASDFPSVSAAVLKRSVIGRSTEVATRAPARL. Residues 174–401 are disordered; that stretch reads KEYGGDKYEN…AGQPGSDQVR (228 aa). Residues 237 to 252 show a composition bias toward low complexity; it reads GPQQGYATPGQGQGTQ. The span at 310-327 shows a compositional bias: gly residues; sequence GQGGSGNYSQGPQGGYNQ. Low complexity predominate over residues 342–356; it reads GPASGAGNLGPAPGA. Over residues 357–367 the composition is skewed to gly residues; that stretch reads GNPGYGQGYSG. The segment covering 371–401 has biased composition (polar residues); that stretch reads EQNQTFPQADQRNRDWNNNNPAGQPGSDQVR.

Belongs to the MORF family. In terms of assembly, homodimer and heterodimer with MORF3. Heterodimers with MORF8/RIP1, MORF4/RIP4 and MORF6/RIP6. Interacts with PCMP-E90/MEF13. Interacts with PCMP-H13/MEF35.

The protein resides in the mitochondrion. Involved in organellar RNA editing. Required for the processing of numerous RNA editing sites in mitochondria. Binds to the mitochondrial MEF19 and MEF21 factors, two pentatricopeptide repeat-containing proteins involved in RNA editing. The chain is Multiple organellar RNA editing factor 1, mitochondrial from Arabidopsis thaliana (Mouse-ear cress).